The chain runs to 514 residues: 2-isopropylmalate synthase (514 aa).

The Pyruvate carboxyltransferase domain occupies 5–267 (LIIFDTTLRD…HTDIETREIV (263 aa)). Mn(2+) is bound by residues aspartate 14, histidine 202, histidine 204, and asparagine 238. The interval 393-514 (KLVALRVCSE…QRTHPQVGDV (122 aa)) is regulatory domain.

This sequence belongs to the alpha-IPM synthase/homocitrate synthase family. LeuA type 1 subfamily. Homodimer. Requires Mn(2+) as cofactor.

The protein resides in the cytoplasm. It catalyses the reaction 3-methyl-2-oxobutanoate + acetyl-CoA + H2O = (2S)-2-isopropylmalate + CoA + H(+). The protein operates within amino-acid biosynthesis; L-leucine biosynthesis; L-leucine from 3-methyl-2-oxobutanoate: step 1/4. Its function is as follows. Catalyzes the condensation of the acetyl group of acetyl-CoA with 3-methyl-2-oxobutanoate (2-ketoisovalerate) to form 3-carboxy-3-hydroxy-4-methylpentanoate (2-isopropylmalate). In Methylococcus capsulatus (strain ATCC 33009 / NCIMB 11132 / Bath), this protein is 2-isopropylmalate synthase.